Consider the following 150-residue polypeptide: UPF0756 membrane protein NT05HA_0561 (150 aa).

4 helical membrane-spanning segments follow: residues 1 to 21 (MSLQ…LGIF), 52 to 72 (YGLS…LVSG), 81 to 101 (AFVS…AWLA), and 128 to 148 (FLGG…VLIG).

The protein belongs to the UPF0756 family.

It is found in the cell membrane. The chain is UPF0756 membrane protein NT05HA_0561 from Aggregatibacter aphrophilus (strain NJ8700) (Haemophilus aphrophilus).